A 784-amino-acid chain; its full sequence is E3 ubiquitin-protein ligase RNF43 (784 aa).

An N-terminal signal peptide occupies residues 1-23 (MSGGHQLQLAVLWPWLLMATLHA). At 24–197 (GFGHTGRVLA…LKEPPAGANY (174 aa)) the chain is on the extracellular side. N62 and N92 each carry an N-linked (GlcNAc...) asparagine glycan. A disulfide bridge connects residues C91 and C119. A helical transmembrane segment spans residues 198–218 (DVWILLTVVGTVFVIILASVL). The Cytoplasmic portion of the chain corresponds to 219-784 (RIRCRPHHSR…ELEELCEQAV (566 aa)). The segment at 272–313 (CAICLEEFSEGQELRVISCLHEFHRTCVDPWLYQHRTCPLCM) adopts an RING-type; atypical zinc-finger fold. 3 disordered regions span residues 364–407 (TSVA…HLAV), 459–478 (ADGP…SSDS), and 516–671 (DLQG…SLPP). Residues 386–395 (RHQRLPRTSH) show a composition bias toward basic residues. A compositionally biased stretch (low complexity) spans 464–478 (SDSSSGPCHGSSSDS). Over residues 548-568 (IHYHRHRHHHYKRQFQWHGRK) the composition is skewed to basic residues. Positions 583 to 608 (SHTQLEPSLPDQQLITPNPTASSMLP) are enriched in polar residues. Low complexity predominate over residues 618–629 (EPAPGLAEASSP).

This sequence belongs to the ZNRF3 family. Interacts with AKAP8L, NONO and SFPQ. Interacts with FZD5. Identified in a complex composed of RNF43, LGR5 and RSPO1. Interacts with RSPO2. Interacts with LMBR1L. Autoubiquitinated. Expressed in crypt base columnar cells of small intestinal epithelium. Crypt base columnar cells are small cycling cells residing between the terminally differentiated Paneth cells at crypt bottoms. Colocalizes with Lgr5-positive stem cells.

It localises to the cell membrane. It is found in the endoplasmic reticulum membrane. Its subcellular location is the nucleus envelope. The catalysed reaction is S-ubiquitinyl-[E2 ubiquitin-conjugating enzyme]-L-cysteine + [acceptor protein]-L-lysine = [E2 ubiquitin-conjugating enzyme]-L-cysteine + N(6)-ubiquitinyl-[acceptor protein]-L-lysine.. Its pathway is protein modification; protein ubiquitination. Its function is as follows. E3 ubiquitin-protein ligase that acts as a negative regulator of the Wnt signaling pathway by mediating the ubiquitination, endocytosis and subsequent degradation of Wnt receptor complex components Frizzled. Acts on both canonical and non-canonical Wnt signaling pathway. Along with RSPO2 and ZNRF3, constitutes a master switch that governs limb specification. In Mus musculus (Mouse), this protein is E3 ubiquitin-protein ligase RNF43 (Rnf43).